Here is a 275-residue protein sequence, read N- to C-terminus: Large ribosomal subunit protein uL2 (275 aa).

Disordered stretches follow at residues 36-55 (PKKR…RHKG) and 223-275 (VVMN…RHAR).

The protein belongs to the universal ribosomal protein uL2 family. Part of the 50S ribosomal subunit. Forms a bridge to the 30S subunit in the 70S ribosome.

One of the primary rRNA binding proteins. Required for association of the 30S and 50S subunits to form the 70S ribosome, for tRNA binding and peptide bond formation. It has been suggested to have peptidyltransferase activity; this is somewhat controversial. Makes several contacts with the 16S rRNA in the 70S ribosome. This is Large ribosomal subunit protein uL2 from Thiobacillus denitrificans (strain ATCC 25259 / T1).